We begin with the raw amino-acid sequence, 1124 residues long: Probable leucine-rich repeat receptor-like protein kinase At2g33170 (1124 aa).

Positions 1-32 (MGWWIFEFKKESKSMFVGVLFLLTLLVWTSES) are cleaved as a signal peptide. Over 33–752 (LNSDGQFLLE…LKAGSARRGR (720 aa)) the chain is Extracellular. Asparagine 72, asparagine 96, and asparagine 131 each carry an N-linked (GlcNAc...) asparagine glycan. LRR repeat units lie at residues 86-109 (VVTSLDLSSMNLSGIVSPSIGGLV), 110-132 (NLVYLNLAYNALTGDIPREIGNC), 134-156 (KLEVMFLNNNQFGGSIPVEINKL), 158-180 (QLRSFNICNNKLSGPLPEEIGDL), 182-205 (NLEELVAYTNNLTGPLPRSLGNLN), 206-228 (KLTTFRAGQNDFSGNIPTEIGKC), 230-252 (NLKLLGLAQNFISGELPKEIGML), 254-277 (KLQEVILWQNKFSGFIPKDIGNLT), 278-300 (SLETLALYGNSLVGPIPSEIGNM), 302-325 (SLKKLYLYQNQLNGTIPKELGKLS), 326-348 (KVMEIDFSENLLSGEIPVELSKI), 350-371 (ELRLLYLFQNKLTGIIPNELSK), 374-397 (NLAKLDLSINSLTGPIPPGFQNLT), 398-420 (SMRQLQLFHNSLSGVIPQGLGLY), 422-444 (PLWVVDFSENQLSGKIPPFICQQ), 446-468 (NLILLNLGSNRIFGNIPPGVLRC), 470-491 (SLLQLRVVGNRLTGQFPTELCK), 494-516 (NLSAIELDQNRFSGPLPPEIGTC), 518-540 (KLQRLHLAANQFSSNLPNEISKL), 542-564 (NLVTFNVSSNSLTGPIPSEIANC), 566-588 (MLQRLDLSRNSFIGSLPPELGSL), 590-613 (QLEILRLSENRFSGNIPFTIGNLT), 614-636 (HLTELQMGGNLFSGSIPPQLGLL), 638-661 (SLQIAMNLSYNDFSGEIPPEIGNL), 663-686 (LLMYLSLNNNHLSGEIPTTFENLS), and 687-709 (SLLGCNFSYNNLTGQLPHTQIFQ). Asparagine 192 carries N-linked (GlcNAc...) asparagine glycosylation. A glycan (N-linked (GlcNAc...) asparagine) is linked at asparagine 275. N-linked (GlcNAc...) asparagine glycosylation is present at asparagine 314. The N-linked (GlcNAc...) asparagine glycan is linked to asparagine 395. Asparagine 494 is a glycosylation site (N-linked (GlcNAc...) asparagine). Asparagine 547 carries an N-linked (GlcNAc...) asparagine glycan. N-linked (GlcNAc...) asparagine glycosylation occurs at asparagine 611. 5 N-linked (GlcNAc...) asparagine glycosylation sites follow: asparagine 644, asparagine 684, asparagine 692, asparagine 697, and asparagine 710. The helical transmembrane segment at 753-773 (IIIIVSSVIGGISLLLIAIVV) threads the bilayer. Over 774-1124 (HFLRNPVEPT…CSDLPPPAPP (351 aa)) the chain is Cytoplasmic. Phosphothreonine occurs at positions 808 and 816. The region spanning 819–1100 (FHDSYIVGRG…TMREVVLMLI (282 aa)) is the Protein kinase domain. Residues 825 to 833 (VGRGACGTV) and lysine 847 contribute to the ATP site. A phosphotyrosine mark is found at tyrosine 901 and tyrosine 939. The active-site Proton acceptor is aspartate 952. Phosphoserine is present on serine 986. 2 positions are modified to phosphotyrosine: tyrosine 994 and tyrosine 1001. Residue threonine 1002 is modified to Phosphothreonine.

This sequence belongs to the protein kinase superfamily. Ser/Thr protein kinase family.

It localises to the membrane. The enzyme catalyses L-seryl-[protein] + ATP = O-phospho-L-seryl-[protein] + ADP + H(+). It carries out the reaction L-threonyl-[protein] + ATP = O-phospho-L-threonyl-[protein] + ADP + H(+). The sequence is that of Probable leucine-rich repeat receptor-like protein kinase At2g33170 from Arabidopsis thaliana (Mouse-ear cress).